The chain runs to 184 residues: NADH-quinone oxidoreductase subunit B 1 (184 aa).

[4Fe-4S] cluster contacts are provided by cysteine 37, cysteine 38, cysteine 103, and cysteine 132.

Belongs to the complex I 20 kDa subunit family. As to quaternary structure, NDH-1 is composed of 14 different subunits. Subunits NuoB, C, D, E, F, and G constitute the peripheral sector of the complex. [4Fe-4S] cluster serves as cofactor.

It is found in the cell membrane. It carries out the reaction a quinone + NADH + 5 H(+)(in) = a quinol + NAD(+) + 4 H(+)(out). Functionally, NDH-1 shuttles electrons from NADH, via FMN and iron-sulfur (Fe-S) centers, to quinones in the respiratory chain. The immediate electron acceptor for the enzyme in this species is believed to be a menaquinone. Couples the redox reaction to proton translocation (for every two electrons transferred, four hydrogen ions are translocated across the cytoplasmic membrane), and thus conserves the redox energy in a proton gradient. This Streptomyces griseus subsp. griseus (strain JCM 4626 / CBS 651.72 / NBRC 13350 / KCC S-0626 / ISP 5235) protein is NADH-quinone oxidoreductase subunit B 1.